A 608-amino-acid polypeptide reads, in one-letter code: Protein UL27 (608 aa).

A compositionally biased stretch (pro residues) spans 1 to 13 (MNPVDQPPPPPLT). Positions 1–33 (MNPVDQPPPPPLTQQPEEQAKEDHDDGDERLFR) are disordered. The segment covering 18–33 (EQAKEDHDDGDERLFR) has biased composition (basic and acidic residues).

This sequence belongs to the herpesviridae U4 family. As to quaternary structure, interacts with host KAT5, PSME3 and EP400.

Its subcellular location is the host nucleus. It localises to the host nucleolus. Functionally, promotes a cell cycle arrest in G0/G1 by inducing the proteasomal degradation of host histone acetyltransferase KAT5/Tip60. The protein is Protein UL27 (UL27) of Homo sapiens (Human).